The following is a 161-amino-acid chain: Ribonuclease H (161 aa).

In terms of domain architecture, RNase H type-1 spans 11-152 (GPRPVVIHTD…ADQLARDGLT (142 aa)). Mg(2+) contacts are provided by Asp20, Glu58, Asp80, and Asp144. The disordered stretch occupies residues 137 to 161 (HDENERADQLARDGLTENRMKSRIG).

The protein belongs to the RNase H family. In terms of assembly, monomer. Requires Mg(2+) as cofactor.

The protein localises to the cytoplasm. It carries out the reaction Endonucleolytic cleavage to 5'-phosphomonoester.. Functionally, endonuclease that specifically degrades the RNA of RNA-DNA hybrids. This chain is Ribonuclease H, found in Rhodopseudomonas palustris (strain HaA2).